Consider the following 65-residue polypeptide: Small ribosomal subunit protein bS21 (65 aa).

The disordered stretch occupies residues 43–65; the sequence is VDDRLKRARSKRRAQRANEESNA. Residues 48-57 show a composition bias toward basic residues; the sequence is KRARSKRRAQ.

Belongs to the bacterial ribosomal protein bS21 family.

This chain is Small ribosomal subunit protein bS21, found in Chloroherpeton thalassium (strain ATCC 35110 / GB-78).